A 94-amino-acid chain; its full sequence is Cell division protein FtsB (94 aa).

Residues 1–3 are Cytoplasmic-facing; the sequence is MRA. Residues 4–21 form a helical membrane-spanning segment; the sequence is FAVLLIIALGWLQYTLWF. The Periplasmic portion of the chain corresponds to 22 to 94; the sequence is GKNGMEDYAQ…YRIIDENSEE (73 aa). Residues 40 to 60 adopt a coiled-coil conformation; the sequence is EEVNQGLRNRNGQMFAEIDDL.

Belongs to the FtsB family. Part of a complex composed of FtsB, FtsL and FtsQ.

The protein resides in the cell inner membrane. In terms of biological role, essential cell division protein. May link together the upstream cell division proteins, which are predominantly cytoplasmic, with the downstream cell division proteins, which are predominantly periplasmic. This Aliivibrio salmonicida (strain LFI1238) (Vibrio salmonicida (strain LFI1238)) protein is Cell division protein FtsB.